Here is a 476-residue protein sequence, read N- to C-terminus: Glycogen synthase (476 aa).

K15 lines the ADP-alpha-D-glucose pocket.

The protein belongs to the glycosyltransferase 1 family. Bacterial/plant glycogen synthase subfamily.

It carries out the reaction [(1-&gt;4)-alpha-D-glucosyl](n) + ADP-alpha-D-glucose = [(1-&gt;4)-alpha-D-glucosyl](n+1) + ADP + H(+). Its pathway is glycan biosynthesis; glycogen biosynthesis. Its function is as follows. Synthesizes alpha-1,4-glucan chains using ADP-glucose. The chain is Glycogen synthase from Streptococcus agalactiae serotype III (strain NEM316).